The primary structure comprises 696 residues: Lutropin-choriogonadotropic hormone receptor (696 aa).

Positions 1–27 (MRRRSLALRLLLALLLLPPPLPQTLLG) are cleaved as a signal peptide. The Extracellular segment spans residues 28-358 (APCPEPCSCR…AFNPCEDIMG (331 aa)). Asparagine 99 carries an N-linked (GlcNAc...) asparagine glycan. LRR repeat units follow at residues 122 to 147 (LPRL…IFSS), 149 to 171 (FNFI…AFQG), 172 to 196 (MNNE…AFNG), 198 to 220 (TLIS…AFRG), 221 to 244 (ARGP…GLES), and 250 to 271 (ATSS…LLDA). N-linked (GlcNAc...) asparagine glycosylation is found at asparagine 174 and asparagine 195. 3 N-linked (GlcNAc...) asparagine glycosylation sites follow: asparagine 291, asparagine 299, and asparagine 313. A Sulfotyrosine modification is found at tyrosine 331. The helical transmembrane segment at 359–386 (YDFLRVLIWLINILAIMGNVTVLFVLLT) threads the bilayer. Residues 387–395 (SHYKLTVPR) lie on the Cytoplasmic side of the membrane. Residues 396 to 418 (FLMCNLSFADFCMGLYLLLIASV) form a helical membrane-spanning segment. Topologically, residues 419–439 (DAQTKGQYYNHAIDWQTGNGC) are extracellular. A disulfide bridge links cysteine 439 with cysteine 514. The chain crosses the membrane as a helical span at residues 440 to 462 (SVAGFFTVFASELSVYTLTVITL). At 463–482 (ERWHTITYAIQLDQKLRLRH) the chain is on the cytoplasmic side. Residues 483–505 (AIPIMLGGWLFSTLIAMLPLVGV) traverse the membrane as a helical segment. Residues 506–525 (SSYMKVSICLPMDVETTLSQ) lie on the Extracellular side of the membrane. Residues 526-547 (VYILTILILNVVAFIIICACYI) form a helical membrane-spanning segment. Residues 548–570 (KIYFAVQNPELMATNKDTKIAKK) are Cytoplasmic-facing. A helical transmembrane segment spans residues 571–594 (MAVLIFTDFTCMAPISFFAISAAL). At 595–605 (KVPLITVTNSK) the chain is on the extracellular side. A helical membrane pass occupies residues 606-626 (VLLVLFYPVNSCANPFLYAIF). Topologically, residues 627–696 (TKAFRRDFFL…VMDKTCYKDC (70 aa)) are cytoplasmic. S-palmitoyl cysteine attachment occurs at residues cysteine 643 and cysteine 644.

It belongs to the G-protein coupled receptor 1 family. FSH/LSH/TSH subfamily. In terms of processing, sulfated.

The protein resides in the cell membrane. Receptor for lutropin-choriogonadotropic hormone. The activity of this receptor is mediated by G proteins which activate adenylate cyclase. The sequence is that of Lutropin-choriogonadotropic hormone receptor (LHCGR) from Sus scrofa (Pig).